We begin with the raw amino-acid sequence, 631 residues long: Phosphomethylpyrimidine synthase (631 aa).

Residues Asn239, Met268, Tyr297, His333, Ser353–Gly355, Asp394–Arg397, and Glu433 each bind substrate. His437 contributes to the Zn(2+) binding site. Tyr460 is a binding site for substrate. His501 serves as a coordination point for Zn(2+). Positions 581, 584, and 589 each coordinate [4Fe-4S] cluster.

This sequence belongs to the ThiC family. Homodimer. Requires [4Fe-4S] cluster as cofactor.

It catalyses the reaction 5-amino-1-(5-phospho-beta-D-ribosyl)imidazole + S-adenosyl-L-methionine = 4-amino-2-methyl-5-(phosphooxymethyl)pyrimidine + CO + 5'-deoxyadenosine + formate + L-methionine + 3 H(+). The protein operates within cofactor biosynthesis; thiamine diphosphate biosynthesis. Functionally, catalyzes the synthesis of the hydroxymethylpyrimidine phosphate (HMP-P) moiety of thiamine from aminoimidazole ribotide (AIR) in a radical S-adenosyl-L-methionine (SAM)-dependent reaction. The chain is Phosphomethylpyrimidine synthase from Escherichia coli O8 (strain IAI1).